Here is a 137-residue protein sequence, read N- to C-terminus: Methylglyoxal synthase (137 aa).

One can recognise an MGS-like domain in the interval 1-137 (MKIALIAHDR…NIVHGRDRDA (137 aa)). Residues His-8, Lys-12, 34–37 (TGTT), and 54–55 (SG) each bind substrate. Asp-60 acts as the Proton donor/acceptor in catalysis. Residue His-87 coordinates substrate.

Belongs to the methylglyoxal synthase family.

It catalyses the reaction dihydroxyacetone phosphate = methylglyoxal + phosphate. Functionally, catalyzes the formation of methylglyoxal from dihydroxyacetone phosphate. The protein is Methylglyoxal synthase of Bacillus licheniformis (strain ATCC 14580 / DSM 13 / JCM 2505 / CCUG 7422 / NBRC 12200 / NCIMB 9375 / NCTC 10341 / NRRL NRS-1264 / Gibson 46).